The chain runs to 90 residues: MARVTVQAAVEKVGNRFKLILVAVHRARLLQSGRENSLVPEENDKVTVIALREIEQGLITESILKENNQHEDQIQKKVQMKTISSTQDFD.

Belongs to the RNA polymerase subunit omega family. The RNAP catalytic core consists of 2 alpha, 1 beta, 1 beta' and 1 omega subunit. When a sigma factor is associated with the core the holoenzyme is formed, which can initiate transcription.

The catalysed reaction is RNA(n) + a ribonucleoside 5'-triphosphate = RNA(n+1) + diphosphate. In terms of biological role, promotes RNA polymerase assembly. Latches the N- and C-terminal regions of the beta' subunit thereby facilitating its interaction with the beta and alpha subunits. This chain is DNA-directed RNA polymerase subunit omega, found in Hamiltonella defensa subsp. Acyrthosiphon pisum (strain 5AT).